Here is a 460-residue protein sequence, read N- to C-terminus: MSFDFIKDRDKKVHFIGIGGISMSGLAAVLLNSGYKVSGSDFKESEILKKLRLSGADIYIGHSEKNIKDVDLVVYTAAIPENNPELIYAKENNIELMNRAEFLGSIMKGHKYNVAISGAHGKTTCTSMLSNITLKANLDPTILVGGELDIIGGNFRIGSSDYFITEACEYKRSFLSFFPYVGVILNIDADHLDYYKDIDEITETFGQFADLIPNDGYLIGYVGDSRVKEILFKAKCNTLSYGFENADVTARNITFNEKGCASFDVYKHNDKLFDLTLSNPGEHNILNALSSICVSLIFDVNYDDIICGLSECKGAHKRFEYKGEVNGVTVIDDYAHHPVEIKATLNTSKKIPHNKTFCVFQPHTYTRTKTLFDEFTDAFFDADEVVLMDIYAAREKDTGLVSSNDLGVALRAKGVKCTNVHSHDEALEYLKNSAKPNDLLLTVGAGDVVIVGEKYLNQGK.

ATP is bound at residue 118–124; the sequence is GAHGKTT.

Belongs to the MurCDEF family.

It localises to the cytoplasm. The catalysed reaction is UDP-N-acetyl-alpha-D-muramate + L-alanine + ATP = UDP-N-acetyl-alpha-D-muramoyl-L-alanine + ADP + phosphate + H(+). Its pathway is cell wall biogenesis; peptidoglycan biosynthesis. Functionally, cell wall formation. In Clostridium botulinum (strain Eklund 17B / Type B), this protein is UDP-N-acetylmuramate--L-alanine ligase.